The sequence spans 336 residues: N6-methyladenosine RNA methyltransferase MTA1 (336 aa).

Residues 61 to 83 (LISSEPPHLPFKTPEPKAGSGGL) form a disordered region.

Belongs to the MT-A70-like family.

The enzyme catalyses an adenosine in mRNA + S-adenosyl-L-methionine = an N(6)-methyladenosine in mRNA + S-adenosyl-L-homocysteine + H(+). N6-methyladenosine RNA methyltransferase that plays a crucial role in fungal phenotypic traits, virulence, and stress tolerance. Mediates the methylation of mRNAs to produce N6-methyladenosine (m6A)-containing mRNAs. M6A is a modification present at internal sites of mRNAs and some non-coding RNAs and plays a role in mRNA stability and processing. Mediates specifically acid phosphatase APHA mRNA stability through a YTHDF1-dependent m6A modification of the A1306, A1341, and A1666 key methylation modification sites. Also mediates the stability of the transcription factor ZAP1 mRNA via modification of residue A1935 localized in the 3'UTR. In Cryphonectria parasitica (strain ATCC 38755 / EP155), this protein is N6-methyladenosine RNA methyltransferase MTA1.